Reading from the N-terminus, the 165-residue chain is Large ribosomal subunit protein uL10 (165 aa).

This sequence belongs to the universal ribosomal protein uL10 family. As to quaternary structure, part of the ribosomal stalk of the 50S ribosomal subunit. The N-terminus interacts with L11 and the large rRNA to form the base of the stalk. The C-terminus forms an elongated spine to which L12 dimers bind in a sequential fashion forming a multimeric L10(L12)X complex.

In terms of biological role, forms part of the ribosomal stalk, playing a central role in the interaction of the ribosome with GTP-bound translation factors. In Salmonella agona (strain SL483), this protein is Large ribosomal subunit protein uL10.